Consider the following 312-residue polypeptide: NAD(P)(+)--arginine ADP-ribosyltransferase 2 (312 aa).

Positions 1 to 20 (MELLALRWVLLAGTLLSTSA) are cleaved as a signal peptide. Residues 21 to 31 (ASSALQEGDLG) constitute a propeptide that is removed on maturation. Disulfide bonds link C51–C260 and C159–C208. The 186-residue stretch at 71–256 (YAYAVGWRKA…IYLRSKGKMS (186 aa)) folds into the TR mART core domain. Positions 108, 164, and 183 each coordinate NAD(+). Residue R164 is part of the active site. S186 is a catalytic residue. S217 provides a ligand contact to NAD(+). E224 is an active-site residue. A propeptide spanning residues 267–312 (GGQWGRGHQEVGLGLSPGLALPVLPCSNCSCWGSGHRAGDPIPAAV) is cleaved from the precursor.

It belongs to the Arg-specific ADP-ribosyltransferase family.

It is found in the secreted. The protein resides in the extracellular space. It carries out the reaction L-arginyl-[protein] + NAD(+) = N(omega)-(ADP-D-ribosyl)-L-arginyl-[protein] + nicotinamide + H(+). This Gallus gallus (Chicken) protein is NAD(P)(+)--arginine ADP-ribosyltransferase 2.